Reading from the N-terminus, the 470-residue chain is Nuclear receptor ROR-beta (470 aa).

The segment at residues 18–93 (VIPCKICGDK…LGMSRDAVKF (76 aa)) is a DNA-binding region (nuclear receptor). 2 consecutive NR C4-type zinc fingers follow at residues 21–41 (CKICGDKSSGIHYGVITCEGC) and 57–81 (CPRQRNCLIDRTNRNRCQHCRLQKC). Residues 104–117 (LYAEVQKHQQRLQE) show a composition bias toward basic and acidic residues. Residues 104-127 (LYAEVQKHQQRLQEQRQQQSGEAE) are disordered. The 239-residue stretch at 222 to 460 (EIDRIAQNII…TLFPPLYKEL (239 aa)) folds into the NR LBD domain. The AF-2 motif lies at 456 to 461 (LYKELF).

This sequence belongs to the nuclear hormone receptor family. NR1 subfamily. Monomer. Interacts with CRX. In terms of tissue distribution, isoform 2 expressed with circadian rhythm in eye and pineal gland. Isoform 1 expressed in retina cortex, thalamus, and hypothalamus.

The protein resides in the nucleus. It localises to the nucleoplasm. Functionally, nuclear receptor that binds DNA as a monomer to ROR response elements (RORE) containing a single core motif half-site 5'-AGGTCA-3' preceded by a short A-T-rich sequence. Considered to have intrinsic transcriptional activity, have some natural ligands such as all-trans retinoic acid (ATRA) and other retinoids which act as inverse agonists repressing the transcriptional activity. Required for normal postnatal development of rod and cone photoreceptor cells. Modulates rod photoreceptors differentiation at least by inducing the transcription factor NRL-mediated pathway. In cone photoreceptor cells, regulates transcription of OPN1SW. Involved in the regulation of the period length and stability of the circadian rhythm. May control cytoarchitectural patterning of neocortical neurons during development. May act in a dose-dependent manner to regulate barrel formation upon innervation of layer IV neurons by thalamocortical axons. May play a role in the suppression of osteoblastic differentiation through the inhibition of RUNX2 transcriptional activity. Critical for hindlimb motor control and for the differentiation of amacrine and horizontal cells in the retina. Regulates the expression of PTF1A synergistically with FOXN4. In Rattus norvegicus (Rat), this protein is Nuclear receptor ROR-beta (Rorb).